The following is a 267-amino-acid chain: Ribosomal RNA small subunit methyltransferase A (267 aa).

6 residues coordinate S-adenosyl-L-methionine: N16, L18, G43, E64, D89, and N110.

It belongs to the class I-like SAM-binding methyltransferase superfamily. rRNA adenine N(6)-methyltransferase family. RsmA subfamily.

The protein resides in the cytoplasm. It catalyses the reaction adenosine(1518)/adenosine(1519) in 16S rRNA + 4 S-adenosyl-L-methionine = N(6)-dimethyladenosine(1518)/N(6)-dimethyladenosine(1519) in 16S rRNA + 4 S-adenosyl-L-homocysteine + 4 H(+). In terms of biological role, specifically dimethylates two adjacent adenosines (A1518 and A1519) in the loop of a conserved hairpin near the 3'-end of 16S rRNA in the 30S particle. May play a critical role in biogenesis of 30S subunits. The protein is Ribosomal RNA small subunit methyltransferase A of Pseudomonas putida (strain ATCC 47054 / DSM 6125 / CFBP 8728 / NCIMB 11950 / KT2440).